The chain runs to 275 residues: Large ribosomal subunit protein uL2c (275 aa).

The interval 222-258 is disordered; that stretch reads GSAMNPVDHPHGGGEGRAPIGRARPVSPWGRPALGAK.

Belongs to the universal ribosomal protein uL2 family. As to quaternary structure, part of the 50S ribosomal subunit.

The protein resides in the plastid. It is found in the chloroplast. The chain is Large ribosomal subunit protein uL2c (rpl2) from Chlorella vulgaris (Green alga).